We begin with the raw amino-acid sequence, 62 residues long: DNA-directed RNA polymerase subunit Rpo10 (62 aa).

Cys6, Cys9, Cys43, and Cys44 together coordinate Zn(2+).

This sequence belongs to the archaeal Rpo10/eukaryotic RPB10 RNA polymerase subunit family. In terms of assembly, part of the RNA polymerase complex. Requires Zn(2+) as cofactor.

It is found in the cytoplasm. It carries out the reaction RNA(n) + a ribonucleoside 5'-triphosphate = RNA(n+1) + diphosphate. Functionally, DNA-dependent RNA polymerase (RNAP) catalyzes the transcription of DNA into RNA using the four ribonucleoside triphosphates as substrates. In Methanosphaerula palustris (strain ATCC BAA-1556 / DSM 19958 / E1-9c), this protein is DNA-directed RNA polymerase subunit Rpo10.